A 156-amino-acid chain; its full sequence is 6,7-dimethyl-8-ribityllumazine synthase (156 aa).

Residues Phe-23, 57–59 (AFE), and 81–83 (AVI) each bind 5-amino-6-(D-ribitylamino)uracil. 86–87 (ST) serves as a coordination point for (2S)-2-hydroxy-3-oxobutyl phosphate. His-89 (proton donor) is an active-site residue. A 5-amino-6-(D-ribitylamino)uracil-binding site is contributed by Phe-114. Arg-128 contributes to the (2S)-2-hydroxy-3-oxobutyl phosphate binding site.

The protein belongs to the DMRL synthase family.

It catalyses the reaction (2S)-2-hydroxy-3-oxobutyl phosphate + 5-amino-6-(D-ribitylamino)uracil = 6,7-dimethyl-8-(1-D-ribityl)lumazine + phosphate + 2 H2O + H(+). It functions in the pathway cofactor biosynthesis; riboflavin biosynthesis; riboflavin from 2-hydroxy-3-oxobutyl phosphate and 5-amino-6-(D-ribitylamino)uracil: step 1/2. Its function is as follows. Catalyzes the formation of 6,7-dimethyl-8-ribityllumazine by condensation of 5-amino-6-(D-ribitylamino)uracil with 3,4-dihydroxy-2-butanone 4-phosphate. This is the penultimate step in the biosynthesis of riboflavin. In Sulfurospirillum multivorans (Dehalospirillum multivorans), this protein is 6,7-dimethyl-8-ribityllumazine synthase.